A 193-amino-acid chain; its full sequence is Mediator of RNA polymerase II transcription subunit 11 (193 aa).

Residues 31–68 (AREIMQDLGKEKQISKNKMDDNANSFKKLITQVENELS) adopt a coiled-coil conformation. The interval 115–193 (IEPPTQEVDE…EEEEGEQMEN (79 aa)) is disordered. The span at 121–143 (EVDEDNEDEEDSGDADMLEETPE) shows a compositional bias: acidic residues. The span at 150–175 (TTSSSATTSDGGSGGADDAASSSAPR) shows a compositional bias: low complexity. Residues 184-193 (EEEEGEQMEN) show a composition bias toward acidic residues.

The protein belongs to the Mediator complex subunit 11 family. In terms of assembly, component of the Mediator complex.

Its subcellular location is the nucleus. In terms of biological role, component of the Mediator complex, a coactivator involved in the regulated transcription of nearly all RNA polymerase II-dependent genes. Mediator functions as a bridge to convey information from gene-specific regulatory proteins to the basal RNA polymerase II transcription machinery. Mediator is recruited to promoters by direct interactions with regulatory proteins and serves as a scaffold for the assembly of a functional pre-initiation complex with RNA polymerase II and the general transcription factors. This chain is Mediator of RNA polymerase II transcription subunit 11 (mdt-11), found in Caenorhabditis briggsae.